We begin with the raw amino-acid sequence, 91 residues long: Putative regulatory protein Tlet_1629 (91 aa).

It belongs to the RemA family.

The polypeptide is Putative regulatory protein Tlet_1629 (Pseudothermotoga lettingae (strain ATCC BAA-301 / DSM 14385 / NBRC 107922 / TMO) (Thermotoga lettingae)).